Here is a 624-residue protein sequence, read N- to C-terminus: Actin-related protein 8 (624 aa).

The residue at position 1 (M1) is an N-acetylmethionine. Residues 1–25 (MTQAEKGDAENGKEKGGEKEKEQRG) are compositionally biased toward basic and acidic residues. Positions 1 to 29 (MTQAEKGDAENGKEKGGEKEKEQRGVKRP) are disordered. Residues S55 and T56 each coordinate ATP. The residue at position 132 (S132) is a Phosphoserine. 283-286 (DVGD) contacts ATP. Position 412 is a phosphoserine (S412). The interval 430 to 462 (SKQEQSAKATADRKSASKPIGFEGDLRGQSSDL) is disordered.

The protein belongs to the actin family. ARP8 subfamily. In terms of assembly, component of the chromatin remodeling INO80 complex; specifically part of a complex module associated with the DBINO domain of INO80. Exists as monomers and dimers, but the dimer is most probably the biologically relevant form required for stable interactions with histones that exploits the twofold symmetry of the nucleosome core.

It is found in the nucleus. Its subcellular location is the chromosome. In terms of biological role, plays an important role in the functional organization of mitotic chromosomes. Exhibits low basal ATPase activity, and unable to polymerize. Proposed core component of the chromatin remodeling INO80 complex which is involved in transcriptional regulation, DNA replication and probably DNA repair. Required for the recruitment of INO80 (and probably the INO80 complex) to sites of DNA damage Strongly prefer nucleosomes and H3-H4 tetramers over H2A-H2B dimers, suggesting it may act as a nucleosome recognition module within the complex. In Mus musculus (Mouse), this protein is Actin-related protein 8 (Actr8).